A 70-amino-acid polypeptide reads, in one-letter code: Protein tam14 (70 aa).

Over residues 1–19 (MPTVQTPSQRRANTQFQKN) the composition is skewed to polar residues. The disordered stretch occupies residues 1–20 (MPTVQTPSQRRANTQFQKNI). A helical transmembrane segment spans residues 45–65 (IAMFFILLMSGGIILGILRFL).

It belongs to the RAMP4 family.

It localises to the membrane. Its subcellular location is the endoplasmic reticulum membrane. Functionally, interacts with target proteins during their translocation into the lumen of the endoplasmic reticulum. Protects unfolded target proteins against degradation during ER stress. May facilitate glycosylation of target proteins after termination of ER stress. The sequence is that of Protein tam14 (tam14) from Schizosaccharomyces pombe (strain 972 / ATCC 24843) (Fission yeast).